We begin with the raw amino-acid sequence, 234 residues long: Large ribosomal subunit protein uL1 (234 aa).

The protein belongs to the universal ribosomal protein uL1 family. In terms of assembly, part of the 50S ribosomal subunit.

In terms of biological role, binds directly to 23S rRNA. The L1 stalk is quite mobile in the ribosome, and is involved in E site tRNA release. Protein L1 is also a translational repressor protein, it controls the translation of the L11 operon by binding to its mRNA. The protein is Large ribosomal subunit protein uL1 of Aliivibrio salmonicida (strain LFI1238) (Vibrio salmonicida (strain LFI1238)).